A 231-amino-acid chain; its full sequence is 7-cyano-7-deazaguanine synthase (231 aa).

Residue 7–17 (LSSGLDSVAAL) coordinates ATP. The Zn(2+) site is built by cysteine 195, cysteine 203, cysteine 206, and cysteine 209.

This sequence belongs to the QueC family. Requires Zn(2+) as cofactor.

It carries out the reaction 7-carboxy-7-deazaguanine + NH4(+) + ATP = 7-cyano-7-deazaguanine + ADP + phosphate + H2O + H(+). The protein operates within purine metabolism; 7-cyano-7-deazaguanine biosynthesis. Its function is as follows. Catalyzes the ATP-dependent conversion of 7-carboxy-7-deazaguanine (CDG) to 7-cyano-7-deazaguanine (preQ(0)). The polypeptide is 7-cyano-7-deazaguanine synthase (Methanosarcina barkeri (strain Fusaro / DSM 804)).